The chain runs to 788 residues: Ribonucleoside-diphosphate reductase large subunit (788 aa).

An ATP-cone domain is found at 7 to 98 (TYVVKRDGRK…VSNLHKKTNK (92 aa)). Residues 11–12 (KR), 17–23 (EDVHFDK), Thr59, and Asp63 each bind ATP. Positions 208 and 223 each coordinate GDP. Cys224 and Cys450 are joined by a disulfide. DTTP is bound by residues 232-234 (DSI), Lys249, Arg262, and 269-270 (AG). Asn433 contacts GDP. The active-site Proton acceptor is Asn433. The Cysteine radical intermediate role is filled by Cys435. Residues Glu437 and 610 to 613 (TAST) each bind GDP. Glu437 (proton acceptor) is an active-site residue.

Belongs to the ribonucleoside diphosphate reductase large chain family. Heterodimer of a large and a small subunit.

The enzyme catalyses a 2'-deoxyribonucleoside 5'-diphosphate + [thioredoxin]-disulfide + H2O = a ribonucleoside 5'-diphosphate + [thioredoxin]-dithiol. Under complex allosteric control mediated by deoxynucleoside triphosphates and ATP binding to separate specificity and activation sites on the large subunit. The type of nucleotide bound at the specificity site determines substrate preference. It seems probable that ATP makes the enzyme reduce CDP and UDP, dGTP favors ADP reduction and dTTP favors GDP reduction. Stimulated by ATP and inhibited by dATP binding to the activity site. Its function is as follows. Provides the precursors necessary for DNA synthesis. Catalyzes the biosynthesis of deoxyribonucleotides from the corresponding ribonucleotides. The polypeptide is Ribonucleoside-diphosphate reductase large subunit (rnr-1) (Caenorhabditis elegans).